The following is an 858-amino-acid chain: Bifunctional uridylyltransferase/uridylyl-removing enzyme (858 aa).

Residues 1–324 are uridylyltransferase; the sequence is MSASVAEPPP…PATSGVTRVL (324 aa). The segment at 325–681 is uridylyl-removing; that stretch reads SPGRFVEKQG…ARPSPVGDAL (357 aa). Positions 443–565 constitute an HD domain; it reads VDQHILMVLR…VGSERRLTAL (123 aa). ACT domains are found at residues 682–761 and 790–858; these read QVLV…PEPS and ILSV…AIAV.

It belongs to the GlnD family. Mg(2+) serves as cofactor.

The enzyme catalyses [protein-PII]-L-tyrosine + UTP = [protein-PII]-uridylyl-L-tyrosine + diphosphate. It catalyses the reaction [protein-PII]-uridylyl-L-tyrosine + H2O = [protein-PII]-L-tyrosine + UMP + H(+). Uridylyltransferase (UTase) activity is inhibited by glutamine, while glutamine activates uridylyl-removing (UR) activity. In terms of biological role, modifies, by uridylylation and deuridylylation, the PII regulatory proteins (GlnB and homologs), in response to the nitrogen status of the cell that GlnD senses through the glutamine level. Under low glutamine levels, catalyzes the conversion of the PII proteins and UTP to PII-UMP and PPi, while under higher glutamine levels, GlnD hydrolyzes PII-UMP to PII and UMP (deuridylylation). Thus, controls uridylylation state and activity of the PII proteins, and plays an important role in the regulation of nitrogen assimilation and metabolism. The polypeptide is Bifunctional uridylyltransferase/uridylyl-removing enzyme (Burkholderia pseudomallei (strain 1106a)).